The following is a 206-amino-acid chain: Proteasome subunit beta 1 (206 aa).

The propeptide at 1 to 14 (MSRIHNDPKVLLTG) is removed in mature form; by autocatalysis. Threonine 15 serves as the catalytic Nucleophile.

This sequence belongs to the peptidase T1B family. As to quaternary structure, the 20S proteasome core is composed of 14 alpha and 14 beta subunits that assemble into four stacked heptameric rings, resulting in a barrel-shaped structure. The two inner rings, each composed of seven catalytic beta subunits, are sandwiched by two outer rings, each composed of seven alpha subunits. The catalytic chamber with the active sites is on the inside of the barrel. Has a gated structure, the ends of the cylinder being occluded by the N-termini of the alpha-subunits. Is capped at one or both ends by the proteasome regulatory ATPase, PAN.

Its subcellular location is the cytoplasm. The catalysed reaction is Cleavage of peptide bonds with very broad specificity.. Its activity is regulated as follows. The formation of the proteasomal ATPase PAN-20S proteasome complex, via the docking of the C-termini of PAN into the intersubunit pockets in the alpha-rings, triggers opening of the gate for substrate entry. Interconversion between the open-gate and close-gate conformations leads to a dynamic regulation of the 20S proteasome proteolysis activity. Functionally, component of the proteasome core, a large protease complex with broad specificity involved in protein degradation. The polypeptide is Proteasome subunit beta 1 (Caldivirga maquilingensis (strain ATCC 700844 / DSM 13496 / JCM 10307 / IC-167)).